The following is a 147-amino-acid chain: UPF0735 ACT domain-containing protein ABC1543 (147 aa).

One can recognise an ACT domain in the interval 70-145; sequence TFSINLADRS…SVERVELVGS (76 aa).

The protein belongs to the UPF0735 family.

This is UPF0735 ACT domain-containing protein ABC1543 from Shouchella clausii (strain KSM-K16) (Alkalihalobacillus clausii).